Reading from the N-terminus, the 195-residue chain is PE-PGRS family protein PE_PGRS61 (195 aa).

The protein belongs to the mycobacterial PE family. PGRS subfamily. In terms of assembly, interacts with human TLR2.

It localises to the secreted. It is found in the cell wall. Its subcellular location is the cell surface. With respect to regulation, binding of Ca(2+) to PE_PGRS61 induces conformational changes and increases affinity for TLR2. In terms of biological role, mediates Ca(2+)-dependent up-regulation of the anti-inflammatory cytokine IL-10. The sequence is that of PE-PGRS family protein PE_PGRS61 from Mycobacterium tuberculosis (strain ATCC 25618 / H37Rv).